Consider the following 662-residue polypeptide: Glutathione hydrolase 7 (662 aa).

Over 1–106 the chain is Cytoplasmic; the sequence is MAAENEASQE…AAECSCRQDG (106 aa). Phosphoserine is present on residues S17, S72, S79, and S83. Positions 26–90 are disordered; sequence SFPRLPEDEP…DGSPLRETRK (65 aa). Residues 72 to 83 show a composition bias toward low complexity; it reads SSSSEMGSQDGS. A helical; Signal-anchor for type II membrane protein membrane pass occupies residues 107–127; that stretch reads LTVIVTACLTFATGVTVALVM. Topologically, residues 128-662 are extracellular; it reads QIYFGDPQIF…SPDAAGATIL (535 aa). N198, N267, N283, N330, N353, N394, N519, N523, and N586 each carry an N-linked (GlcNAc...) asparagine glycan.

The protein belongs to the gamma-glutamyltransferase family. As to quaternary structure, heterodimer composed of the light and heavy chains. The active site is located in the light chain. Cleaved by autocatalysis into a large and a small subunit and the autocatalytic cleavage is essential to the functional activation of the enzyme.

The protein resides in the membrane. The enzyme catalyses an N-terminal (5-L-glutamyl)-[peptide] + an alpha-amino acid = 5-L-glutamyl amino acid + an N-terminal L-alpha-aminoacyl-[peptide]. It catalyses the reaction glutathione + H2O = L-cysteinylglycine + L-glutamate. It carries out the reaction an S-substituted glutathione + H2O = an S-substituted L-cysteinylglycine + L-glutamate. It functions in the pathway sulfur metabolism; glutathione metabolism. Hydrolyzes and transfers gamma-glutamyl moieties from glutathione and other gamma-glutamyl compounds to acceptors. The polypeptide is Glutathione hydrolase 7 (Mus musculus (Mouse)).